A 1366-amino-acid polypeptide reads, in one-letter code: DNA-directed RNA polymerase subunit beta (1366 aa).

This sequence belongs to the RNA polymerase beta chain family. The RNAP catalytic core consists of 2 alpha, 1 beta, 1 beta' and 1 omega subunit. When a sigma factor is associated with the core the holoenzyme is formed, which can initiate transcription.

The catalysed reaction is RNA(n) + a ribonucleoside 5'-triphosphate = RNA(n+1) + diphosphate. Its function is as follows. DNA-dependent RNA polymerase catalyzes the transcription of DNA into RNA using the four ribonucleoside triphosphates as substrates. This chain is DNA-directed RNA polymerase subunit beta, found in Polynucleobacter asymbioticus (strain DSM 18221 / CIP 109841 / QLW-P1DMWA-1) (Polynucleobacter necessarius subsp. asymbioticus).